We begin with the raw amino-acid sequence, 150 residues long: Transcriptional regulator MraZ (150 aa).

SpoVT-AbrB domains follow at residues 6-52 and 80-126; these read EFFN…PYQE and AVEC…NRTK.

It belongs to the MraZ family. In terms of assembly, forms oligomers.

It localises to the cytoplasm. It is found in the nucleoid. In Syntrophotalea carbinolica (strain DSM 2380 / NBRC 103641 / GraBd1) (Pelobacter carbinolicus), this protein is Transcriptional regulator MraZ.